The chain runs to 319 residues: Cell division protein PomZ (319 aa).

Position 61-68 (61-68 (KGGTGKTS)) interacts with ATP.

It belongs to the ParA family. In terms of assembly, interacts with FtsZ in pull-down experiments.

The protein resides in the cytoplasm. In terms of biological role, spatial regulator of cell division that is involved in identifying the incipient division site, recruiting FtsZ to the division site and stabilizing the Z-ring. Binds ATP and GTP. The sequence is that of Cell division protein PomZ from Myxococcus xanthus (strain DK1622).